A 467-amino-acid chain; its full sequence is Serine/threonine-protein kinase SSN3 (467 aa).

Polar residues-rich tracts occupy residues 1-12 (MSFSNLPPSSGR) and 29-39 (GSSSFTANNPS). The interval 1 to 45 (MSFSNLPPSSGRGSHADGASGRSMPPFPGSSSFTANNPSKGIHPN) is disordered. The region spanning 79–408 (YLIVGFISSG…AKEALNHPYF (330 aa)) is the Protein kinase domain. ATP contacts are provided by residues 85 to 93 (ISSGTYGRV) and Lys109. Asp211 functions as the Proton acceptor in the catalytic mechanism. The disordered stretch occupies residues 426-467 (YPNRRVSQDDNDIRSGSLPGTKRSGLPDDTLTSRAAKRAREM).

The protein belongs to the protein kinase superfamily. CMGC Ser/Thr protein kinase family. CDC2/CDKX subfamily. As to quaternary structure, component of the SRB8-11 complex, a regulatory module of the Mediator complex. The cofactor is Mg(2+).

The protein resides in the nucleus. The enzyme catalyses L-seryl-[protein] + ATP = O-phospho-L-seryl-[protein] + ADP + H(+). It carries out the reaction L-threonyl-[protein] + ATP = O-phospho-L-threonyl-[protein] + ADP + H(+). The catalysed reaction is [DNA-directed RNA polymerase] + ATP = phospho-[DNA-directed RNA polymerase] + ADP + H(+). Functionally, component of the SRB8-11 complex. The SRB8-11 complex is a regulatory module of the Mediator complex which is itself involved in regulation of basal and activated RNA polymerase II-dependent transcription. The SRB8-11 complex may be involved in the transcriptional repression of a subset of genes regulated by Mediator. It may inhibit the association of the Mediator complex with RNA polymerase II to form the holoenzyme complex. The SRB8-11 complex phosphorylates the C-terminal domain (CTD) of the largest subunit of RNA polymerase II. The chain is Serine/threonine-protein kinase SSN3 (SSN3) from Coccidioides immitis (strain RS) (Valley fever fungus).